Here is a 199-residue protein sequence, read N- to C-terminus: MIGCLIGEVFALEAPTVLLNVNGVGYEIDTPLSTFCQLQKGQKVTLWTHLVVREDAQQLYGFSDAQEKTIFRTLLKVNGVGPKMALGILSTLNVELLVHTIEHDDVNTLVKVPGVGKKTAERLMIELRDRFKTLAQGTSSAAALPQIQFVSNSPVAEAEAALQSLGYKPLEAQKAVAAVKADYTESADIIRAALKSMMK.

Positions methionine 1 to serine 63 are domain I. The tract at residues aspartate 64–alanine 142 is domain II. The segment at alanine 143–valine 150 is flexible linker. Residues valine 150–lysine 199 are domain III.

It belongs to the RuvA family. In terms of assembly, homotetramer. Forms an RuvA(8)-RuvB(12)-Holliday junction (HJ) complex. HJ DNA is sandwiched between 2 RuvA tetramers; dsDNA enters through RuvA and exits via RuvB. An RuvB hexamer assembles on each DNA strand where it exits the tetramer. Each RuvB hexamer is contacted by two RuvA subunits (via domain III) on 2 adjacent RuvB subunits; this complex drives branch migration. In the full resolvosome a probable DNA-RuvA(4)-RuvB(12)-RuvC(2) complex forms which resolves the HJ.

The protein localises to the cytoplasm. In terms of biological role, the RuvA-RuvB-RuvC complex processes Holliday junction (HJ) DNA during genetic recombination and DNA repair, while the RuvA-RuvB complex plays an important role in the rescue of blocked DNA replication forks via replication fork reversal (RFR). RuvA specifically binds to HJ cruciform DNA, conferring on it an open structure. The RuvB hexamer acts as an ATP-dependent pump, pulling dsDNA into and through the RuvAB complex. HJ branch migration allows RuvC to scan DNA until it finds its consensus sequence, where it cleaves and resolves the cruciform DNA. The sequence is that of Holliday junction branch migration complex subunit RuvA from Acinetobacter baumannii (strain ACICU).